The primary structure comprises 539 residues: uncharacterized protein (539 aa).

2 ABC transporter domains span residues 9–276 and 288–536; these read LEVK…EFKK and IKLE…QEMF. ATP-binding positions include 41–48 and 325–332; these read GKSGAGKS and GTSGAGKT.

It belongs to the ABC transporter superfamily.

This is an uncharacterized protein from Methanocaldococcus jannaschii (strain ATCC 43067 / DSM 2661 / JAL-1 / JCM 10045 / NBRC 100440) (Methanococcus jannaschii).